A 216-amino-acid chain; its full sequence is Holliday junction branch migration complex subunit RuvA (216 aa).

The domain I stretch occupies residues 1 to 64 (MISFIKGVLI…EDAQQLYGFK (64 aa)). Residues 65 to 143 (SKVDKKVFQE…KMANEIYAQT (79 aa)) form a domain II region. The segment at 144 to 163 (SGTTTTSQDSQAQQAPTSVV) is flexible linker. Residues 164–216 (LANSIFNESVDALLALGYKQKDAEKMARSAMGDATTAAEVIRKALQGSIKSKR) are domain III.

This sequence belongs to the RuvA family. Homotetramer. Forms an RuvA(8)-RuvB(12)-Holliday junction (HJ) complex. HJ DNA is sandwiched between 2 RuvA tetramers; dsDNA enters through RuvA and exits via RuvB. An RuvB hexamer assembles on each DNA strand where it exits the tetramer. Each RuvB hexamer is contacted by two RuvA subunits (via domain III) on 2 adjacent RuvB subunits; this complex drives branch migration. In the full resolvosome a probable DNA-RuvA(4)-RuvB(12)-RuvC(2) complex forms which resolves the HJ.

The protein localises to the cytoplasm. In terms of biological role, the RuvA-RuvB-RuvC complex processes Holliday junction (HJ) DNA during genetic recombination and DNA repair, while the RuvA-RuvB complex plays an important role in the rescue of blocked DNA replication forks via replication fork reversal (RFR). RuvA specifically binds to HJ cruciform DNA, conferring on it an open structure. The RuvB hexamer acts as an ATP-dependent pump, pulling dsDNA into and through the RuvAB complex. HJ branch migration allows RuvC to scan DNA until it finds its consensus sequence, where it cleaves and resolves the cruciform DNA. The protein is Holliday junction branch migration complex subunit RuvA of Francisella tularensis subsp. tularensis (strain WY96-3418).